A 482-amino-acid polypeptide reads, in one-letter code: Catalase (482 aa).

Positions 1-23 are enriched in polar residues; the sequence is MSQNKTLTTASGPPVADNQNSRS. Residues 1-28 form a disordered region; that stretch reads MSQNKTLTTASGPPVADNQNSRSAGPRG. Residues His-55 and Asn-128 contribute to the active site. Tyr-338 is a heme binding site. The disordered stretch occupies residues 370–395; sequence SMAFGSNGGAAPNYEPNSYADAPKQA.

This sequence belongs to the catalase family. Heme is required as a cofactor.

The enzyme catalyses 2 H2O2 = O2 + 2 H2O. Its function is as follows. Decomposes hydrogen peroxide into water and oxygen; serves to protect cells from the toxic effects of hydrogen peroxide. The chain is Catalase (cat) from Onchocerca volvulus endobacterium.